Here is a 185-residue protein sequence, read N- to C-terminus: Riboflavin kinase (185 aa).

Mg(2+)-binding residues include T41 and N43. Residue E122 is the Nucleophile of the active site.

It belongs to the flavokinase family. Requires Zn(2+) as cofactor. Mg(2+) serves as cofactor.

It carries out the reaction riboflavin + ATP = FMN + ADP + H(+). Its pathway is cofactor biosynthesis; FMN biosynthesis; FMN from riboflavin (ATP route): step 1/1. Its function is as follows. Catalyzes the phosphorylation of riboflavin (vitamin B2) to form flavin mononucleotide (FMN) coenzyme. This is Riboflavin kinase (FMN1) from Kluyveromyces lactis (strain ATCC 8585 / CBS 2359 / DSM 70799 / NBRC 1267 / NRRL Y-1140 / WM37) (Yeast).